The sequence spans 687 residues: MEFLGDSQNHDSSETEKKNKKKKRFHRHTPHQIQRLESTFNECQHPDEKQRNQLSRELGLAPRQIKFWFQNRRTQKKAQHERADNCALKEENDKIRCENIAIREAIKHAICPSCGDSPVNEDSYFDEQKLRIENAQLRDELERVSSIAAKFLGRPISHLPPLLNPMHVSPLELFHTGPSLDFDLLPGSCSSMSVPSLPSQPNLVLSEMDKSLMTNIAVTAMEELLRLLQTNEPLWIKTDGCRDVLNLENYENMFTRSSTSGGKKNNLGMEASRSSGVVFTNAITLVDMLMNSVKLTELFPSIVASSKTLAVISSGLRGNHGDALHLMIEELQVLSPLVTTREFCVLRYCQQIEHGTWAIVNVSYEFPQFISQSRSYRFPSGCLIQDMSNGYSKVTWVEHGEFEEQEPIHEMFKDIVHKGLAFGAERWIATLQRMCERFTNLLEPATSSLDLGGVIPSPEGKRSIMRLAHRMVSNFCLSVGTSNNTRSTVVSGLDEFGIRVTSHKSRHEPNGMVLCAATSFWLPISPQNVFNFLKDERTRPQWDVLSNGNSVQEVAHITNGSNPGNCISVLRGFNASSSQNNMLILQESCIDSSSAALVIYTPVDLPALNIAMSGQDTSYIPILPSGFAISPDGSSKGGGSLITVGFQIMVSGLQPAKLNMESMETVNNLINTTVHQIKTTLNCPSTA.

Residues 1-32 are disordered; the sequence is MEFLGDSQNHDSSETEKKNKKKKRFHRHTPHQ. A compositionally biased stretch (basic and acidic residues) spans 8–17; the sequence is QNHDSSETEK. The span at 18–30 shows a compositional bias: basic residues; it reads KNKKKKRFHRHTP. The homeobox DNA-binding region spans 21–80; that stretch reads KKKRFHRHTPHQIQRLESTFNECQHPDEKQRNQLSRELGLAPRQIKFWFQNRRTQKKAQH. Positions 87-150 form a coiled coil; that stretch reads ALKEENDKIR…LERVSSIAAK (64 aa). In terms of domain architecture, START spans 206-440; sequence SEMDKSLMTN…LQRMCERFTN (235 aa).

The protein belongs to the HD-ZIP homeobox family. Class IV subfamily. As to quaternary structure, interacts with BBM. As to expression, expressed in apical meristems and young epidermal tissue including trichomes and stipules. Expressed in lateral root tips, the L1 layer of apical inflorescence meristems and early flower primordia, carpel and stamen filament epidermis, stigma papillae, ovule primordia, nucellus and embryo.

The protein localises to the nucleus. Its function is as follows. Probable transcription factor that acts as a negative regulator of trichome branching in association with HDG11. Seems to promote cell differentiation. May regulate cell differentiation and proliferation during root and shoot meristem development. Acts as a positive regulator of SCL18/LAS expression. Involved, together with PDF2, in the regulation of flower organs development by promoting the expression of APETALA 3 (AP3) in the epidermis and internal cell layers of developing flowers. The sequence is that of Homeobox-leucine zipper protein HDG12 from Arabidopsis thaliana (Mouse-ear cress).